The following is a 192-amino-acid chain: SPbeta prophage-derived uncharacterized protein YokK (192 aa).

The polypeptide is SPbeta prophage-derived uncharacterized protein YokK (yokK) (Bacillus subtilis (strain 168)).